Reading from the N-terminus, the 733-residue chain is SWR1-complex protein 4 (733 aa).

Disordered stretches follow at residues 1 to 34 (MTSHDVRDVLNLPSDHAGPRPSKKARTATPRPNL) and 98 to 128 (PDGTVQDGSAEGQDSAATADNSADKPEDSSF). An SANT domain is found at 146–217 (NTNLKHPDWT…DLKARYYEVA (72 aa)). The stretch at 247 to 299 (KQEQNRKRFAENTLKRSSDEAREEEALLLEIKRIMARTERFNEERRELYNRLD) forms a coiled coil. The segment covering 371 to 384 (AASRRESLAASSTA) has biased composition (low complexity). Disordered stretches follow at residues 371–488 (AASR…GSGP) and 564–733 (KKAE…KQKK). Composition is skewed to basic and acidic residues over residues 387–423 (NDHHEPPVREPPVRHERQESRSHHRNESRSERADRHG), 463–484 (PERRKLSEHEEQVYGVSHHDRL), 564–589 (KKAERERAAREAAEARGETVEKKGGE), and 610–653 (DDAK…KGEE). Positions 699–710 (GSSSGAGASSGA) are enriched in low complexity.

The protein belongs to the SWC4 family. Component of the SWR1 chromatin-remodeling complex and of the NuA4 histone acetyltransferase complex.

The protein resides in the nucleus. Component of the SWR1 complex which mediates the ATP-dependent exchange of histone H2A for the H2A variant H2A.Z leading to transcriptional regulation of selected genes by chromatin remodeling. Component of the NuA4 histone acetyltransferase complex which is involved in transcriptional activation of selected genes principally by acetylation of nucleosomal histone H4 and H2A. The NuA4 complex is also involved in DNA repair. This Neurospora crassa (strain ATCC 24698 / 74-OR23-1A / CBS 708.71 / DSM 1257 / FGSC 987) protein is SWR1-complex protein 4 (crc-1).